We begin with the raw amino-acid sequence, 315 residues long: Tyrosine recombinase XerC (315 aa).

Positions M1–V103 constitute a Core-binding (CB) domain. The Tyr recombinase domain maps to E124–D306. Residues R164, K188, H258, R261, and H284 contribute to the active site. Y293 serves as the catalytic O-(3'-phospho-DNA)-tyrosine intermediate.

This sequence belongs to the 'phage' integrase family. XerC subfamily. As to quaternary structure, forms a cyclic heterotetrameric complex composed of two molecules of XerC and two molecules of XerD.

It localises to the cytoplasm. Site-specific tyrosine recombinase, which acts by catalyzing the cutting and rejoining of the recombining DNA molecules. The XerC-XerD complex is essential to convert dimers of the bacterial chromosome into monomers to permit their segregation at cell division. It also contributes to the segregational stability of plasmids. The sequence is that of Tyrosine recombinase XerC from Chlamydia trachomatis serovar L2b (strain UCH-1/proctitis).